Reading from the N-terminus, the 431-residue chain is Na(+)-translocating NADH-quinone reductase subunit F (431 aa).

A helical transmembrane segment spans residues 10-30 (IFVASAAFCSLGLILVAVILL). In terms of domain architecture, 2Fe-2S ferredoxin-type spans 41–133 (CKLKINNDDS…DLCLEVEERY (93 aa)). 4 residues coordinate [2Fe-2S] cluster: Cys-76, Cys-82, Cys-85, and Cys-117. Positions 136-286 (ASSWEGTVVS…SGPYGESFMK (151 aa)) constitute an FAD-binding FR-type domain. Residues 289 to 413 (NRPVIFLIGG…ALHNSSILTL (125 aa)) form a catalytic region.

The protein belongs to the NqrF family. As to quaternary structure, composed of six subunits; NqrA, NqrB, NqrC, NqrD, NqrE and NqrF. The cofactor is [2Fe-2S] cluster. FAD is required as a cofactor.

The protein resides in the cell inner membrane. The catalysed reaction is a ubiquinone + n Na(+)(in) + NADH + H(+) = a ubiquinol + n Na(+)(out) + NAD(+). Functionally, NQR complex catalyzes the reduction of ubiquinone-1 to ubiquinol by two successive reactions, coupled with the transport of Na(+) ions from the cytoplasm to the periplasm. The first step is catalyzed by NqrF, which accepts electrons from NADH and reduces ubiquinone-1 to ubisemiquinone by a one-electron transfer pathway. The chain is Na(+)-translocating NADH-quinone reductase subunit F from Chlamydia trachomatis serovar D (strain ATCC VR-885 / DSM 19411 / UW-3/Cx).